The following is a 1058-amino-acid chain: Carbamoyl phosphate synthase large chain (1058 aa).

The carboxyphosphate synthetic domain stretch occupies residues 1-401; sequence MAKRTDIKKI…CLLKACRSLE (401 aa). ATP is bound by residues Arg129, Arg169, Gly175, Gly176, Arg208, Ile210, Glu215, Gly241, Ile242, His243, Gln284, and Glu298. The ATP-grasp 1 domain maps to 133–327; that stretch reads KQLMKELGEP…IAKIAAKIAV (195 aa). 3 residues coordinate Mg(2+): Gln284, Glu298, and Asn300. Gln284, Glu298, and Asn300 together coordinate Mn(2+). The oligomerization domain stretch occupies residues 402 to 546; sequence IGVDHNELKG…YSTYEWENES (145 aa). The segment at 547–929 is carbamoyl phosphate synthetic domain; it reads IKSEKESVIV…ALYKAFEASY (383 aa). Residues 671–861 form the ATP-grasp 2 domain; that stretch reads EKALKDLGIP…MAQVATKLIL (191 aa). Positions 707, 746, 748, 752, 777, 778, 779, 780, 820, and 832 each coordinate ATP. The Mg(2+) site is built by Gln820, Glu832, and Asn834. Mn(2+)-binding residues include Gln820, Glu832, and Asn834. Positions 930–1058 constitute an MGS-like domain; sequence LHMPEYGTIV…ESRTFSIEAI (129 aa). Positions 930–1058 are allosteric domain; it reads LHMPEYGTIV…ESRTFSIEAI (129 aa).

This sequence belongs to the CarB family. In terms of assembly, composed of two chains; the small (or glutamine) chain promotes the hydrolysis of glutamine to ammonia, which is used by the large (or ammonia) chain to synthesize carbamoyl phosphate. Tetramer of heterodimers (alpha,beta)4. Mg(2+) serves as cofactor. The cofactor is Mn(2+).

The enzyme catalyses hydrogencarbonate + L-glutamine + 2 ATP + H2O = carbamoyl phosphate + L-glutamate + 2 ADP + phosphate + 2 H(+). It catalyses the reaction hydrogencarbonate + NH4(+) + 2 ATP = carbamoyl phosphate + 2 ADP + phosphate + 2 H(+). The protein operates within amino-acid biosynthesis; L-arginine biosynthesis; carbamoyl phosphate from bicarbonate: step 1/1. It functions in the pathway pyrimidine metabolism; UMP biosynthesis via de novo pathway; (S)-dihydroorotate from bicarbonate: step 1/3. Its function is as follows. Large subunit of the glutamine-dependent carbamoyl phosphate synthetase (CPSase). CPSase catalyzes the formation of carbamoyl phosphate from the ammonia moiety of glutamine, carbonate, and phosphate donated by ATP, constituting the first step of 2 biosynthetic pathways, one leading to arginine and/or urea and the other to pyrimidine nucleotides. The large subunit (synthetase) binds the substrates ammonia (free or transferred from glutamine from the small subunit), hydrogencarbonate and ATP and carries out an ATP-coupled ligase reaction, activating hydrogencarbonate by forming carboxy phosphate which reacts with ammonia to form carbamoyl phosphate. This chain is Carbamoyl phosphate synthase large chain, found in Streptococcus equi subsp. zooepidemicus (strain H70).